Here is a 274-residue protein sequence, read N- to C-terminus: Dermonecrotic toxin LarSicTox-alphaIV1 (274 aa).

Residue His5 is part of the active site. Positions 25 and 27 each coordinate Mg(2+). The active-site Nucleophile is His41. 2 disulfides stabilise this stretch: Cys45/Cys51 and Cys47/Cys192. A Mg(2+)-binding site is contributed by Asp85.

Belongs to the arthropod phospholipase D family. Class II subfamily. Mg(2+) serves as cofactor. In terms of tissue distribution, expressed by the venom gland.

The protein localises to the secreted. The enzyme catalyses an N-(acyl)-sphingosylphosphocholine = an N-(acyl)-sphingosyl-1,3-cyclic phosphate + choline. It carries out the reaction an N-(acyl)-sphingosylphosphoethanolamine = an N-(acyl)-sphingosyl-1,3-cyclic phosphate + ethanolamine. The catalysed reaction is a 1-acyl-sn-glycero-3-phosphocholine = a 1-acyl-sn-glycero-2,3-cyclic phosphate + choline. It catalyses the reaction a 1-acyl-sn-glycero-3-phosphoethanolamine = a 1-acyl-sn-glycero-2,3-cyclic phosphate + ethanolamine. In terms of biological role, dermonecrotic toxins cleave the phosphodiester linkage between the phosphate and headgroup of certain phospholipids (sphingolipid and lysolipid substrates), forming an alcohol (often choline) and a cyclic phosphate. This toxin acts on sphingomyelin (SM). It may also act on ceramide phosphoethanolamine (CPE), lysophosphatidylcholine (LPC) and lysophosphatidylethanolamine (LPE), but not on lysophosphatidylserine (LPS), and lysophosphatidylglycerol (LPG). It acts by transphosphatidylation, releasing exclusively cyclic phosphate products as second products. Induces dermonecrosis, hemolysis, increased vascular permeability, edema, inflammatory response, and platelet aggregation. The chain is Dermonecrotic toxin LarSicTox-alphaIV1 from Loxosceles arizonica (Arizona brown spider).